Reading from the N-terminus, the 373-residue chain is Flagellar P-ring protein (373 aa).

The first 27 residues, 1-27 (MPSFSPTLLKLAAAALSALLLSGVAAS), serve as a signal peptide directing secretion.

This sequence belongs to the FlgI family. As to quaternary structure, the basal body constitutes a major portion of the flagellar organelle and consists of four rings (L,P,S, and M) mounted on a central rod.

It is found in the periplasm. The protein resides in the bacterial flagellum basal body. In terms of biological role, assembles around the rod to form the L-ring and probably protects the motor/basal body from shearing forces during rotation. This chain is Flagellar P-ring protein, found in Rhodopseudomonas palustris (strain BisB5).